The primary structure comprises 168 residues: Dihydrofolate reductase (168 aa).

A DHFR domain is found at 1–164 (MIIGIWAEDE…YTFTIKKYEK (164 aa)). 5–7 (IWA) lines the substrate pocket. Residues 6 to 7 (WA) and 14 to 19 (IGEADK) contribute to the NADP(+) site. Glu-27 contacts substrate. 43–46 (GRKT) is a binding site for NADP(+). Residue Arg-58 coordinates substrate. NADP(+) is bound by residues 63–66 (LTRD) and 99–104 (TGGAEI). Thr-118 is a binding site for substrate.

This sequence belongs to the dihydrofolate reductase family.

The enzyme catalyses (6S)-5,6,7,8-tetrahydrofolate + NADP(+) = 7,8-dihydrofolate + NADPH + H(+). Its pathway is cofactor biosynthesis; tetrahydrofolate biosynthesis; 5,6,7,8-tetrahydrofolate from 7,8-dihydrofolate: step 1/1. Its function is as follows. Key enzyme in folate metabolism. Catalyzes an essential reaction for de novo glycine and purine synthesis, and for DNA precursor synthesis. The chain is Dihydrofolate reductase (folA) from Lactococcus lactis subsp. lactis (strain IL1403) (Streptococcus lactis).